A 596-amino-acid chain; its full sequence is Probable ABC transporter ECU01_0200/ECU01_1410 (596 aa).

Transmembrane regions (helical) follow at residues 26–46 (ALMAVVAACIVLGKWFDVMSI), 173–193 (LVPILFTAAAYAAYTCVMLRI), and 289–309 (LSVLFSFVLSIDASMWTLGGI). In terms of domain architecture, ABC transmembrane type-1 spans 39–318 (KWFDVMSIKR…IARDLGFWLT (280 aa)). Residues 361–593 (VEFDDVSFAY…RGMYWRMKTA (233 aa)) enclose the ABC transporter domain. Residues Tyr-370 and 400–411 (GRPGSGKSTILR) each bind ATP.

This sequence belongs to the ABC transporter superfamily. ABCB family. Heavy Metal importer (TC 3.A.1.210) subfamily.

It is found in the membrane. The sequence is that of Probable ABC transporter ECU01_0200/ECU01_1410 from Encephalitozoon cuniculi (strain GB-M1) (Microsporidian parasite).